A 377-amino-acid chain; its full sequence is Cell division protein FtsZ (377 aa).

Over residues 1–16 the composition is skewed to acidic residues; sequence MDSIVDDAIDEAEDMG. The disordered stretch occupies residues 1–33; the sequence is MDSIVDDAIDEAEDMGDGSAEVGGPTDINRSGT. GTP-binding positions include 57–61, 144–146, Glu-175, Arg-179, and Asp-222; these read GAGGN and GTG.

Belongs to the FtsZ family. As to quaternary structure, homodimer. Polymerizes to form a dynamic ring structure in a strictly GTP-dependent manner. Interacts directly with several other division proteins.

The protein localises to the cytoplasm. In terms of biological role, essential cell division protein that forms a contractile ring structure (Z ring) at the future cell division site. The regulation of the ring assembly controls the timing and the location of cell division. One of the functions of the FtsZ ring is to recruit other cell division proteins to the septum to produce a new cell wall between the dividing cells. Binds GTP and shows GTPase activity. The protein is Cell division protein FtsZ of Haloferax mediterranei (strain ATCC 33500 / DSM 1411 / JCM 8866 / NBRC 14739 / NCIMB 2177 / R-4) (Halobacterium mediterranei).